Here is a 478-residue protein sequence, read N- to C-terminus: Cytochrome P450 family 716 subfamily AD polypeptide 4 (478 aa).

A helical transmembrane segment spans residues 1–21 (MELFLPSVLLILTVFCFYYLF). A heme-binding site is contributed by Cys-425.

Belongs to the cytochrome P450 family. Requires heme as cofactor. As to expression, mainly expressed in petioles and, to a lower extent, in roots.

The protein resides in the membrane. It catalyses the reaction (1S,3bR,4R,5aR,9aR,9bR,11aS)-1-[(4R)-5-[(2S)-3,3-dimethyloxiran-2-yl]-1,4-dihydroxybutan-2-yl]-3b,6,6,9a,11a-pentamethyl-7-oxo-1H,2H,3bH,4H,5H,5aH,6H,7H,9aH,9bH,10H,11H,11aH-cyclopenta[a]phenanthren-4-yl acetate + reduced [NADPH--hemoprotein reductase] + O2 = (1S,3bR,4R,5aR,9aR,9bR,11aS)-1-(1-hydroxy-4-oxobutan-2-yl)-3b,6,6,9a,11a-pentamethyl-7-oxo-1H,2H,3bH,4H,5H,5aH,6H,7H,9aH,9bH,10H,11H,11aH-cyclopenta[a]phenanthren-4-yl acetate + 2-methylpropanoate + oxidized [NADPH--hemoprotein reductase] + H2O + 2 H(+). Its pathway is secondary metabolite biosynthesis; terpenoid biosynthesis. In terms of biological role, monooxygenase involved in the biosynthesis of limonoids triterpene natural products such as azadirachtin, an antifeedant widely used as bioinsecticide, and possessing many medicinal applications including anti-tumoral, anti-malarial, anti-rheumatic, antibacterial, anti-inflammatory, anti-pyretic and diuretic effects. Catalyzes the formation of (1S,3bR,4R,5aR,9aR,9bR,11aS)-1-(1-hydroxy-4-oxobutan-2-yl)-3b,6,6,9a,11a-pentamethyl-7-oxo-1H,2H,3bH,4H,5H,5aH,6H,7H,9aH,9bH,10H,11H,11aH-cyclopenta[a]phenanthren-4-yl acetate. In Melia azedarach (Chinaberry tree), this protein is Cytochrome P450 family 716 subfamily AD polypeptide 4.